We begin with the raw amino-acid sequence, 284 residues long: MDAIKKKMQAMKLEKDNAMDRADTLEQQNKEANNRAEKTEEEIRATQKKMQQVENELDQAQEQLSAANTKLDEKEKALQNAEGEVAALNRRIQLLEEDLERSEERLNTATTKLAEASQAADESERMRKVLENRSLSDEERMDALENQLKEARFLAEEADRKYDEVARKLAMVEADLERAEERAESGESKIVELEEELRVVGNNLKSLEVSEEKANQREETYKEQIKTLANKLKAAEARAEFAERSVQKLQKEVDRLEDELVNEKEKYKSITDELDQTFSELSGY.

The interval 1 to 54 (MDAIKKKMQAMKLEKDNAMDRADTLEQQNKEANNRAEKTEEEIRATQKKMQQVE) is disordered. Positions 1-273 (MDAIKKKMQA…KEKYKSITDE (273 aa)) form a coiled coil. The span at 12-45 (KLEKDNAMDRADTLEQQNKEANNRAEKTEEEIRA) shows a compositional bias: basic and acidic residues.

It belongs to the tropomyosin family. Homodimer. Muscle (at protein level). Expressed in leg and chest protection muscle (at protein level). Expressed in claw muscle.

Functionally, tropomyosin, in association with the troponin complex, plays a central role in the calcium dependent regulation of muscle contraction. This chain is Tropomyosin, found in Eriocheir sinensis (Chinese mitten crab).